Here is a 254-residue protein sequence, read N- to C-terminus: 3-deoxy-manno-octulosonate cytidylyltransferase (254 aa).

Belongs to the KdsB family.

The protein localises to the cytoplasm. The enzyme catalyses 3-deoxy-alpha-D-manno-oct-2-ulosonate + CTP = CMP-3-deoxy-beta-D-manno-octulosonate + diphosphate. It participates in nucleotide-sugar biosynthesis; CMP-3-deoxy-D-manno-octulosonate biosynthesis; CMP-3-deoxy-D-manno-octulosonate from 3-deoxy-D-manno-octulosonate and CTP: step 1/1. The protein operates within bacterial outer membrane biogenesis; lipopolysaccharide biosynthesis. Functionally, activates KDO (a required 8-carbon sugar) for incorporation into bacterial lipopolysaccharide in Gram-negative bacteria. In Bordetella parapertussis (strain 12822 / ATCC BAA-587 / NCTC 13253), this protein is 3-deoxy-manno-octulosonate cytidylyltransferase.